A 564-amino-acid polypeptide reads, in one-letter code: Pyruvate decarboxylase (564 aa).

Asp28 and His115 together coordinate pyruvate. Residues Thr390 and 413–415 (GSI) each bind thiamine diphosphate. Asp444 contributes to the Mg(2+) binding site. Residues 445–446 (GS) and 471–476 (NNGYTI) contribute to the thiamine diphosphate site. Mg(2+)-binding residues include Asn471 and Gly473. Glu477 is a pyruvate binding site.

It belongs to the TPP enzyme family. In terms of assembly, homotetramer. Requires Mg(2+) as cofactor. It depends on thiamine diphosphate as a cofactor.

The enzyme catalyses a 2-oxocarboxylate + H(+) = an aldehyde + CO2. The catalysed reaction is pyruvate + H(+) = acetaldehyde + CO2. The polypeptide is Pyruvate decarboxylase (PDC) (Hanseniaspora uvarum (Yeast)).